The sequence spans 314 residues: Acetaldehyde dehydrogenase 1 (314 aa).

Residue 15-18 (SGNI) coordinates NAD(+). The active-site Acyl-thioester intermediate is the Cys-133. NAD(+)-binding positions include 164-172 (SAGPGTRAN) and Asn-291.

The protein belongs to the acetaldehyde dehydrogenase family.

The enzyme catalyses acetaldehyde + NAD(+) + CoA = acetyl-CoA + NADH + H(+). This chain is Acetaldehyde dehydrogenase 1, found in Paraburkholderia xenovorans (strain LB400).